The following is a 357-amino-acid chain: Dual-specificity RNA methyltransferase RlmN (357 aa).

Glu89 (proton acceptor) is an active-site residue. Residues Glu109–Asp340 enclose the Radical SAM core domain. Cys116 and Cys345 are oxidised to a cystine. [4Fe-4S] cluster contacts are provided by Cys123, Cys127, and Cys130. Residues Gly173–Glu174, Ser203, Ser226–His228, and Asn302 contribute to the S-adenosyl-L-methionine site. Catalysis depends on Cys345, which acts as the S-methylcysteine intermediate.

The protein belongs to the radical SAM superfamily. RlmN family. It depends on [4Fe-4S] cluster as a cofactor.

Its subcellular location is the cytoplasm. It carries out the reaction adenosine(2503) in 23S rRNA + 2 reduced [2Fe-2S]-[ferredoxin] + 2 S-adenosyl-L-methionine = 2-methyladenosine(2503) in 23S rRNA + 5'-deoxyadenosine + L-methionine + 2 oxidized [2Fe-2S]-[ferredoxin] + S-adenosyl-L-homocysteine. The catalysed reaction is adenosine(37) in tRNA + 2 reduced [2Fe-2S]-[ferredoxin] + 2 S-adenosyl-L-methionine = 2-methyladenosine(37) in tRNA + 5'-deoxyadenosine + L-methionine + 2 oxidized [2Fe-2S]-[ferredoxin] + S-adenosyl-L-homocysteine. Functionally, specifically methylates position 2 of adenine 2503 in 23S rRNA and position 2 of adenine 37 in tRNAs. m2A2503 modification seems to play a crucial role in the proofreading step occurring at the peptidyl transferase center and thus would serve to optimize ribosomal fidelity. The polypeptide is Dual-specificity RNA methyltransferase RlmN (Helicobacter pylori (strain J99 / ATCC 700824) (Campylobacter pylori J99)).